Consider the following 209-residue polypeptide: Uracil phosphoribosyltransferase (209 aa).

5-phospho-alpha-D-ribose 1-diphosphate contacts are provided by residues arginine 79, arginine 104, and 131–139 (DPMLATGGS). Uracil contacts are provided by residues isoleucine 194 and 199 to 201 (GDA). Aspartate 200 contacts 5-phospho-alpha-D-ribose 1-diphosphate.

This sequence belongs to the UPRTase family. The cofactor is Mg(2+).

The catalysed reaction is UMP + diphosphate = 5-phospho-alpha-D-ribose 1-diphosphate + uracil. It functions in the pathway pyrimidine metabolism; UMP biosynthesis via salvage pathway; UMP from uracil: step 1/1. Its activity is regulated as follows. Allosterically activated by GTP. Its function is as follows. Catalyzes the conversion of uracil and 5-phospho-alpha-D-ribose 1-diphosphate (PRPP) to UMP and diphosphate. The protein is Uracil phosphoribosyltransferase of Pediococcus pentosaceus (strain ATCC 25745 / CCUG 21536 / LMG 10740 / 183-1w).